The primary structure comprises 227 residues: 2-C-methyl-D-erythritol 4-phosphate cytidylyltransferase (227 aa).

It belongs to the IspD/TarI cytidylyltransferase family. IspD subfamily.

The catalysed reaction is 2-C-methyl-D-erythritol 4-phosphate + CTP + H(+) = 4-CDP-2-C-methyl-D-erythritol + diphosphate. The protein operates within isoprenoid biosynthesis; isopentenyl diphosphate biosynthesis via DXP pathway; isopentenyl diphosphate from 1-deoxy-D-xylulose 5-phosphate: step 2/6. Catalyzes the formation of 4-diphosphocytidyl-2-C-methyl-D-erythritol from CTP and 2-C-methyl-D-erythritol 4-phosphate (MEP). The protein is 2-C-methyl-D-erythritol 4-phosphate cytidylyltransferase of Bordetella parapertussis (strain 12822 / ATCC BAA-587 / NCTC 13253).